We begin with the raw amino-acid sequence, 58 residues long: Photosystem II reaction center protein K (58 aa).

The propeptide occupies 1-21; that stretch reads MLVISNVYPSNLFTLINPFFA. A helical transmembrane segment spans residues 29–49; that stretch reads IFDPIVDVMPIIPVFFFLLAF.

Belongs to the PsbK family. PSII is composed of 1 copy each of membrane proteins PsbA, PsbB, PsbC, PsbD, PsbE, PsbF, PsbH, PsbI, PsbJ, PsbK, PsbL, PsbM, PsbT, PsbX, PsbY, PsbZ, Psb30/Ycf12, at least 3 peripheral proteins of the oxygen-evolving complex and a large number of cofactors. It forms dimeric complexes.

The protein resides in the plastid. Its subcellular location is the chloroplast thylakoid membrane. Functionally, one of the components of the core complex of photosystem II (PSII). PSII is a light-driven water:plastoquinone oxidoreductase that uses light energy to abstract electrons from H(2)O, generating O(2) and a proton gradient subsequently used for ATP formation. It consists of a core antenna complex that captures photons, and an electron transfer chain that converts photonic excitation into a charge separation. The protein is Photosystem II reaction center protein K of Psilotum nudum (Whisk fern).